The chain runs to 399 residues: Alpha-tubulin N-acetyltransferase (399 aa).

Positions 1 to 178 (MEFNFIINKL…NNFVVFDQYF (178 aa)) constitute an N-acetyltransferase domain. Acetyl-CoA is bound by residues 112 to 125 (FYVHESCQRQGYGK) and 148 to 157 (SPKLIAFLKK). A compositionally biased stretch (polar residues) spans 183 to 193 (SSQNKQNQNTR). Positions 183 to 223 (SSQNKQNQNTRSYSQPYSDYSSQIPTNYPQQQQQQSNSKSY) are disordered. Over residues 194 to 223 (SYSQPYSDYSSQIPTNYPQQQQQQSNSKSY) the composition is skewed to low complexity.

It belongs to the acetyltransferase ATAT1 family.

It catalyses the reaction L-lysyl-[alpha-tubulin] + acetyl-CoA = N(6)-acetyl-L-lysyl-[alpha-tubulin] + CoA + H(+). Its function is as follows. Specifically acetylates 'Lys-40' in alpha-tubulin on the lumenal side of microtubules. Promotes microtubule destabilization and accelerates microtubule dynamics; this activity may be independent of acetylation activity. Acetylates alpha-tubulin with a slow enzymatic rate, due to a catalytic site that is not optimized for acetyl transfer. Enters the microtubule through each end and diffuses quickly throughout the lumen of microtubules. Acetylates only long/old microtubules because of its slow acetylation rate since it does not have time to act on dynamically unstable microtubules before the enzyme is released. The polypeptide is Alpha-tubulin N-acetyltransferase (Tetrahymena thermophila (strain SB210)).